The sequence spans 219 residues: Cell division protein B2 (219 aa).

In terms of biological role, part of a cell division machinery. This chain is Cell division protein B2, found in Sulfolobus acidocaldarius (strain ATCC 33909 / DSM 639 / JCM 8929 / NBRC 15157 / NCIMB 11770).